A 297-amino-acid chain; its full sequence is Urease accessory protein UreD (297 aa).

This sequence belongs to the UreD family. In terms of assembly, ureD, UreF and UreG form a complex that acts as a GTP-hydrolysis-dependent molecular chaperone, activating the urease apoprotein by helping to assemble the nickel containing metallocenter of UreC. The UreE protein probably delivers the nickel.

It is found in the cytoplasm. Its function is as follows. Required for maturation of urease via the functional incorporation of the urease nickel metallocenter. In Prochlorococcus marinus subsp. pastoris (strain CCMP1986 / NIES-2087 / MED4), this protein is Urease accessory protein UreD.